The primary structure comprises 239 residues: Trimethylguanosine synthase (239 aa).

The protein belongs to the methyltransferase superfamily. Trimethylguanosine synthase family. In terms of assembly, monomer. Interacts with mug174; both proteins are required to maintain Cajal body integrity.

It localises to the nucleus. The protein resides in the cajal body. It carries out the reaction a 5'-end (N(7)-methyl 5'-triphosphoguanosine)-ribonucleoside in snRNA + S-adenosyl-L-methionine = a 5'-end (N(2),N(7)-dimethyl 5'-triphosphoguanosine)-ribonucleoside in snRNA + S-adenosyl-L-homocysteine + H(+). The enzyme catalyses a 5'-end (N(7)-methyl 5'-triphosphoguanosine)-ribonucleoside in snoRNA + S-adenosyl-L-methionine = a 5'-end (N(2),N(7)-dimethyl 5'-triphosphoguanosine)-ribonucleoside in snoRNA + S-adenosyl-L-homocysteine + H(+). The catalysed reaction is a 5'-end (N(2),N(7)-dimethyl 5'-triphosphoguanosine)-ribonucleoside in snRNA + S-adenosyl-L-methionine = a 5'-end (N(2),N(2),N(7)-trimethyl 5'-triphosphoguanosine)-ribonucleoside in snRNA + S-adenosyl-L-homocysteine + H(+). It catalyses the reaction a 5'-end (N(2),N(7)-dimethyl 5'-triphosphoguanosine)-ribonucleoside in snoRNA + S-adenosyl-L-methionine = a 5'-end (N(2),N(2),N(7)-trimethyl 5'-triphosphoguanosine)-ribonucleoside in snoRNA + S-adenosyl-L-homocysteine + H(+). Its activity is regulated as follows. Substrate inhibited by S-adenosyl-L-homocysteine. Its function is as follows. Catalyzes the two serial methylation steps for the conversion of the 7-monomethylguanosine (m(7)G) caps of snRNAs and snoRNAs to a 2,2,7-trimethylguanosine (m(2,2,7)G) cap structure. The enzyme is specific for guanine, and N7 methylation must precede N2 methylation. Required for pre-mRNA splicing, pre-rRNA processing and small ribosomal subunit synthesis. Involved in nucleolar structural organization. The protein is Trimethylguanosine synthase (tgs1) of Schizosaccharomyces pombe (strain 972 / ATCC 24843) (Fission yeast).